A 337-amino-acid chain; its full sequence is MNKLLLLILFECIIFLSCSGKGSLESEIPKVSLIIDGTFDDKSFNESALNGIKKVKEEFKIEPVLKESSTNSYLSDLEGLKDTGSNLIWLIGYKFSDVAKSVSLQNPEIKYAIIDPVYSDEPIPANLVGMTFRSQEGAFLTGYIAAKVSKTGKIGFLGGIEGEIVDAFRYGYEAGAKYANKDIKISAYYIGSFADLEAGRSVATKMYSDGIDIIHHAAGLGGIGAIEVAKELGSGHYIIGVDGDQSYLAPNNIITSATKDVGRSLNIFTSNYLKTNTFEGGRLINYGLKEGVVGFIKNPKMIPFELEKEIDNLSSKIINQEIIVPYNKESYEKFIKE.

An N-terminal signal peptide occupies residues 1-17 (MNKLLLLILFECIIFLS). Residue Cys-18 is the site of N-palmitoyl cysteine attachment. The S-diacylglycerol cysteine moiety is linked to residue Cys-18.

The protein belongs to the BMP lipoprotein family. In terms of assembly, monomer.

The protein localises to the cell inner membrane. In terms of biological role, immunogenic protein. May be part of an ABC-type nucleoside uptake system involved in the purine salvage pathway. In Borrelia garinii subsp. bavariensis (strain ATCC BAA-2496 / DSM 23469 / PBi) (Borreliella bavariensis), this protein is Basic membrane protein A1 (bmpA1).